Reading from the N-terminus, the 346-residue chain is Putative alpha/beta hydrolase R526 (346 aa).

Belongs to the AB hydrolase 3 family.

It is found in the virion. The chain is Putative alpha/beta hydrolase R526 from Acanthamoeba polyphaga mimivirus (APMV).